The following is a 330-amino-acid chain: Succinylglutamate desuccinylase (330 aa).

Zn(2+) contacts are provided by His-53, Glu-56, and His-147. Glu-210 is a catalytic residue.

Belongs to the AspA/AstE family. Succinylglutamate desuccinylase subfamily. Requires Zn(2+) as cofactor.

The catalysed reaction is N-succinyl-L-glutamate + H2O = L-glutamate + succinate. It participates in amino-acid degradation; L-arginine degradation via AST pathway; L-glutamate and succinate from L-arginine: step 5/5. Transforms N(2)-succinylglutamate into succinate and glutamate. In Yersinia pseudotuberculosis serotype O:1b (strain IP 31758), this protein is Succinylglutamate desuccinylase.